A 473-amino-acid polypeptide reads, in one-letter code: Proline transporter 1 (473 aa).

Basic and acidic residues predominate over residues 1-11 (MDQHQLDEENQ). A disordered region spans residues 1–31 (MDQHQLDEENQRAALFHSSAPSSSLGADGEE). Transmembrane regions (helical) follow at residues 65 to 85 (PWYQ…VLGY), 88 to 108 (SIMV…AAAI), 145 to 165 (LTWA…IILA), 188 to 208 (IALS…LSAL), 210 to 230 (IWLG…FVMS), 252 to 272 (IFTT…GMLP), 290 to 310 (LWFQ…MGYW), 333 to 353 (VANL…ASPM), 378 to 398 (VGVR…LPFL), 401 to 421 (FMSL…ANHM), and 437 to 457 (WHWL…VAAV).

Belongs to the amino acid/polyamine transporter 2 family. Amino acid/auxin permease (AAAP) (TC 2.A.18.3) subfamily. Expressed in roots, leaf blades and sheaths, stems and young panicle.

The protein resides in the cell membrane. Functionally, proline transporter that mediates proline transport across the plasma membrane when expressed in a heterologous system (Xenopus oocytes). The chain is Proline transporter 1 (PROT1) from Oryza sativa subsp. japonica (Rice).